A 400-amino-acid chain; its full sequence is CCA-adding enzyme (400 aa).

ATP-binding residues include glycine 28 and arginine 31. Glycine 28 and arginine 31 together coordinate CTP. Mg(2+)-binding residues include aspartate 41 and aspartate 43. 5 residues coordinate ATP: arginine 112, aspartate 155, arginine 158, arginine 161, and arginine 164. Arginine 112, aspartate 155, arginine 158, arginine 161, and arginine 164 together coordinate CTP.

It belongs to the tRNA nucleotidyltransferase/poly(A) polymerase family. Bacterial CCA-adding enzyme type 3 subfamily. Homodimer. The cofactor is Mg(2+).

It carries out the reaction a tRNA precursor + 2 CTP + ATP = a tRNA with a 3' CCA end + 3 diphosphate. It catalyses the reaction a tRNA with a 3' CCA end + 2 CTP + ATP = a tRNA with a 3' CCACCA end + 3 diphosphate. Functionally, catalyzes the addition and repair of the essential 3'-terminal CCA sequence in tRNAs without using a nucleic acid template. Adds these three nucleotides in the order of C, C, and A to the tRNA nucleotide-73, using CTP and ATP as substrates and producing inorganic pyrophosphate. tRNA 3'-terminal CCA addition is required both for tRNA processing and repair. Also involved in tRNA surveillance by mediating tandem CCA addition to generate a CCACCA at the 3' terminus of unstable tRNAs. While stable tRNAs receive only 3'-terminal CCA, unstable tRNAs are marked with CCACCA and rapidly degraded. This Oceanobacillus iheyensis (strain DSM 14371 / CIP 107618 / JCM 11309 / KCTC 3954 / HTE831) protein is CCA-adding enzyme.